A 532-amino-acid polypeptide reads, in one-letter code: Probable alpha-galactosidase A (532 aa).

Positions 1 to 21 (MDTTKSLLSTLIAIMIPLSLG) are cleaved as a signal peptide. An intrachain disulfide couples Cys-44 to Cys-76. N-linked (GlcNAc...) asparagine glycans are attached at residues Asn-47, Asn-91, and Asn-121. A disulfide bridge connects residues Cys-124 and Cys-154. Asp-152 serves as the catalytic Nucleophile. The N-linked (GlcNAc...) asparagine glycan is linked to Asn-201. Asp-210 (proton donor) is an active-site residue. Residues 410-531 (CSTVIPTGIV…GLPSGVDIKP (122 aa)) enclose the Ricin B-type lectin domain. Disulfide bonds link Cys-427/Cys-441 and Cys-466/Cys-478.

The protein belongs to the glycosyl hydrolase 27 family.

Its subcellular location is the secreted. It carries out the reaction Hydrolysis of terminal, non-reducing alpha-D-galactose residues in alpha-D-galactosides, including galactose oligosaccharides, galactomannans and galactolipids.. Functionally, hydrolyzes a variety of simple alpha-D-galactoside as well as more complex molecules such as oligosaccharides and polysaccharides. The protein is Probable alpha-galactosidase A (aglA) of Aspergillus fumigatus (strain ATCC MYA-4609 / CBS 101355 / FGSC A1100 / Af293) (Neosartorya fumigata).